The primary structure comprises 271 residues: MSRVGVLVLGPAGAGKSTFCNAIISHMQSIGRRAHIVNLDPAAEATKYEFTIDIRDLISLEDVMEEFGLGPNGSLIYCFEYLLNNLDWLDEEIGDYNDEYLIFDCPGQIELYTHIPVLPTIVRHLQNQLNFNLCATYLLEAPFVIDTSKFFSGALSAMSAMILLELPHINILSKLDLVKDSHNKKALKKFLNPDPLLLTDKVNEETNPKFHKLNEAIANLVDDFGMVQFLPLEAKNPESVSTILSYIDDVTQWAEAQEPKEPNDQIEIDDM.

A GTP-binding site is contributed by 13-18 (GAGKST). The short motif at 70–72 (GPN) is the Gly-Pro-Asn (GPN)-loop; involved in dimer interface element. Position 173 to 176 (173 to 176 (SKLD)) interacts with GTP.

It belongs to the GPN-loop GTPase family. In terms of assembly, heterodimers with GPN1 or GPN2. Binds to RNA polymerase II (RNAPII).

In terms of biological role, small GTPase required for proper nuclear import of RNA polymerase II and III (RNAPII and RNAPIII). May act at an RNAP assembly step prior to nuclear import. The sequence is that of GPN-loop GTPase 3 from Kluyveromyces lactis (strain ATCC 8585 / CBS 2359 / DSM 70799 / NBRC 1267 / NRRL Y-1140 / WM37) (Yeast).